Consider the following 319-residue polypeptide: D-alanine--D-alanine ligase (319 aa).

Residues 120 to 315 form the ATP-grasp domain; sequence KRVLAQAGVP…YPELLRRLVE (196 aa). 147 to 198 contributes to the ATP binding site; it reads DPPFFVKPANTGSSVGISRVERFQDLEAALALAFRYDEKAVVEKALSPVREL. Mg(2+)-binding residues include D270, E282, and N284.

This sequence belongs to the D-alanine--D-alanine ligase family. Mg(2+) serves as cofactor. It depends on Mn(2+) as a cofactor.

Its subcellular location is the cytoplasm. The catalysed reaction is 2 D-alanine + ATP = D-alanyl-D-alanine + ADP + phosphate + H(+). It participates in cell wall biogenesis; peptidoglycan biosynthesis. Functionally, cell wall formation. This is D-alanine--D-alanine ligase from Thermus thermophilus (strain ATCC 27634 / DSM 579 / HB8).